Reading from the N-terminus, the 481-residue chain is Proline--tRNA ligase 2 (481 aa).

This sequence belongs to the class-II aminoacyl-tRNA synthetase family. ProS type 3 subfamily. As to quaternary structure, homodimer.

It localises to the cytoplasm. The enzyme catalyses tRNA(Pro) + L-proline + ATP = L-prolyl-tRNA(Pro) + AMP + diphosphate. Functionally, catalyzes the attachment of proline to tRNA(Pro) in a two-step reaction: proline is first activated by ATP to form Pro-AMP and then transferred to the acceptor end of tRNA(Pro). In Clostridioides difficile (strain 630) (Peptoclostridium difficile), this protein is Proline--tRNA ligase 2.